We begin with the raw amino-acid sequence, 187 residues long: Probable carboxylesterase Culp7 (187 aa).

Cys15 and Cys69 are oxidised to a cystine. Ser80 acts as the Nucleophile in catalysis. Cys151 and Cys158 are oxidised to a cystine. Asp155 is an active-site residue. His167 serves as the catalytic Proton donor/acceptor.

The protein belongs to the cutinase family.

The protein resides in the cytoplasm. It localises to the cell membrane. It is found in the secreted. The protein localises to the cell wall. Functionally, may have a role in cell wall processes. Does not exhibit cutinase activity. The polypeptide is Probable carboxylesterase Culp7 (Mycobacterium tuberculosis (strain ATCC 25618 / H37Rv)).